The primary structure comprises 87 residues: Cytochrome c oxidase subunit 6B1 (87 aa).

Residues 28–74 enclose the CHCH domain; it reads TRNCWQNYLDFHRCQKAMTTKGGNVSVCEWYQRVYQSLCPTSWVTDW. The Cx9C motif motif lies at 31–41; the sequence is CWQNYLDFHRC. Disulfide bonds link Cys-31–Cys-66 and Cys-41–Cys-55. Residues 55 to 66 carry the Cx10C motif motif; that stretch reads CEWYQRVYQSLC.

It is found in the mitochondrion intermembrane space. In terms of biological role, connects the two COX monomers into the physiological dimeric form. This is Cytochrome c oxidase subunit 6B1 (COX6B1) from Macaca fascicularis (Crab-eating macaque).